The sequence spans 331 residues: FMRFamide-related neuropeptides (331 aa).

Positions 1–25 are cleaved as a signal peptide; sequence MRCWSPCSLLVVIAIYCLSSHTSEA. Positions 26–65 are excised as a propeptide; it reads FDLAQACVESQRLSLLPICDTIFAVQQEGAQQSADDGLRS. 2 positions are modified to phenylalanine amide: F71 and F83. Positions 86–94 are excised as a propeptide; the sequence is NVPDLPFED. F100 is modified (phenylalanine amide). The propeptide occupies 103–168; the sequence is AAPQLDDLLK…YVDDVEDSDV (66 aa). Positions 122–153 are disordered; it reads QKSDDTSVRRKRSTDAAPQSNTDSAEQKNDSA. Phenylalanine amide is present on residues F174 and F181. A propeptide spanning residues 184 to 194 is cleaved from the precursor; that stretch reads NPSDVGSKLTE. F200 bears the Phenylalanine amide mark. Positions 203-205 are excised as a propeptide; the sequence is DPE. F211 carries the post-translational modification Phenylalanine amide. A propeptide spanning residues 214–216 is cleaved from the precursor; sequence SDD. F222 is subject to Phenylalanine amide. The propeptide occupies 225–236; it reads NPGDAEDELEED. Phenylalanine amide is present on F242. Residues 245-254 constitute a propeptide that is removed on maturation; sequence GDEEDEEEAE. Residue F260 is modified to Phenylalanine amide. A propeptide spanning residues 263–265 is cleaved from the precursor; sequence DPE. Residue F271 is modified to Phenylalanine amide. Residues 274–277 constitute a propeptide that is removed on maturation; the sequence is NGEE. A Phenylalanine amide modification is found at F283. A propeptide spanning residues 286–293 is cleaved from the precursor; that stretch reads NPEEPEAD. Position 299 is a phenylalanine amide (F299). A propeptide spanning residues 302–312 is cleaved from the precursor; sequence GGEEDDVNTEE. A Phenylalanine amide modification is found at F318. Positions 321–331 are excised as a propeptide; it reads SAEKCKGCLEG.

It belongs to the FARP (FMRFamide related peptide) family. Present ubiquitously in the brain and regions of the central nervous system as well as in the periphery and throughout the dermal chromatophore layer (at protein level).

Its subcellular location is the secreted. In terms of biological role, excitatory neurotransmitters that directly modulate chromatophore function by activating chromatophore expansion at the chromatophore neuromuscular junction. The polypeptide is FMRFamide-related neuropeptides (Sepia officinalis (Common cuttlefish)).